A 255-amino-acid polypeptide reads, in one-letter code: Small ribosomal subunit protein uS2 (255 aa).

Positions 233–255 (DFVAEEAASEESLEELAEIVEGK) are disordered.

Belongs to the universal ribosomal protein uS2 family.

This is Small ribosomal subunit protein uS2 from Lactococcus lactis subsp. cremoris (strain SK11).